A 136-amino-acid chain; its full sequence is Photosystem II extrinsic protein U (136 aa).

The signal sequence occupies residues 1 to 28 (MKQLAQRLFSLALVLALVLGISVQSAQA).

It belongs to the PsbU family. In terms of assembly, PSII is composed of 1 copy each of membrane proteins PsbA, PsbB, PsbC, PsbD, PsbE, PsbF, PsbH, PsbI, PsbJ, PsbK, PsbL, PsbM, PsbT, PsbX, PsbY, PsbZ, Psb30/Ycf12, peripheral proteins PsbO, CyanoQ (PsbQ), PsbU, PsbV and a large number of cofactors. It forms dimeric complexes.

It localises to the cellular thylakoid membrane. One of the extrinsic, lumenal subunits of photosystem II (PSII). PSII is a light-driven water plastoquinone oxidoreductase, using light energy to abstract electrons from H(2)O, generating a proton gradient subsequently used for ATP formation. The extrinsic proteins stabilize the structure of photosystem II oxygen-evolving complex (OEC), the ion environment of oxygen evolution and protect the OEC against heat-induced inactivation. The protein is Photosystem II extrinsic protein U of Synechococcus elongatus (strain ATCC 33912 / PCC 7942 / FACHB-805) (Anacystis nidulans R2).